The chain runs to 332 residues: Holliday junction branch migration complex subunit RuvB (332 aa).

The large ATPase domain (RuvB-L) stretch occupies residues 1–181; that stretch reads MARILDNNVM…FGITGHMEYY (181 aa). Residues L20, R21, G62, K65, T66, T67, 128–130, R171, Y181, and R218 each bind ATP; that span reads EDF. T66 serves as a coordination point for Mg(2+). A small ATPAse domain (RuvB-S) region spans residues 182–252; that stretch reads QEKDLTEIVE…ITDRALTMLD (71 aa). The tract at residues 255 to 332 is head domain (RuvB-H); that stretch reads REGLDYIDQK…RHLGYPYQNT (78 aa). Positions 291, 310, 312, and 315 each coordinate DNA.

Belongs to the RuvB family. Homohexamer. Forms an RuvA(8)-RuvB(12)-Holliday junction (HJ) complex. HJ DNA is sandwiched between 2 RuvA tetramers; dsDNA enters through RuvA and exits via RuvB. An RuvB hexamer assembles on each DNA strand where it exits the tetramer. Each RuvB hexamer is contacted by two RuvA subunits (via domain III) on 2 adjacent RuvB subunits; this complex drives branch migration. In the full resolvosome a probable DNA-RuvA(4)-RuvB(12)-RuvC(2) complex forms which resolves the HJ.

Its subcellular location is the cytoplasm. It catalyses the reaction ATP + H2O = ADP + phosphate + H(+). In terms of biological role, the RuvA-RuvB-RuvC complex processes Holliday junction (HJ) DNA during genetic recombination and DNA repair, while the RuvA-RuvB complex plays an important role in the rescue of blocked DNA replication forks via replication fork reversal (RFR). RuvA specifically binds to HJ cruciform DNA, conferring on it an open structure. The RuvB hexamer acts as an ATP-dependent pump, pulling dsDNA into and through the RuvAB complex. RuvB forms 2 homohexamers on either side of HJ DNA bound by 1 or 2 RuvA tetramers; 4 subunits per hexamer contact DNA at a time. Coordinated motions by a converter formed by DNA-disengaged RuvB subunits stimulates ATP hydrolysis and nucleotide exchange. Immobilization of the converter enables RuvB to convert the ATP-contained energy into a lever motion, pulling 2 nucleotides of DNA out of the RuvA tetramer per ATP hydrolyzed, thus driving DNA branch migration. The RuvB motors rotate together with the DNA substrate, which together with the progressing nucleotide cycle form the mechanistic basis for DNA recombination by continuous HJ branch migration. Branch migration allows RuvC to scan DNA until it finds its consensus sequence, where it cleaves and resolves cruciform DNA. This chain is Holliday junction branch migration complex subunit RuvB, found in Streptococcus pyogenes serotype M1.